Consider the following 218-residue polypeptide: N-(5'-phosphoribosyl)anthranilate isomerase (218 aa).

It belongs to the TrpF family.

It carries out the reaction N-(5-phospho-beta-D-ribosyl)anthranilate = 1-(2-carboxyphenylamino)-1-deoxy-D-ribulose 5-phosphate. It participates in amino-acid biosynthesis; L-tryptophan biosynthesis; L-tryptophan from chorismate: step 3/5. This is N-(5'-phosphoribosyl)anthranilate isomerase from Bacillus licheniformis (strain ATCC 14580 / DSM 13 / JCM 2505 / CCUG 7422 / NBRC 12200 / NCIMB 9375 / NCTC 10341 / NRRL NRS-1264 / Gibson 46).